A 423-amino-acid polypeptide reads, in one-letter code: Methanol:N,N-dimethyl-4-nitrosoaniline oxidoreductase (423 aa).

This sequence belongs to the iron-containing alcohol dehydrogenase family. Homodecamer. It depends on Mg(2+) as a cofactor. Zn(2+) serves as cofactor. NADPH is required as a cofactor.

It catalyses the reaction methanol + A = formaldehyde + AH2. Catalyzes the oxidation of methanol to yield formaldehyde. While the in vivo electron acceptor is not known, N,N-dimethyl-4-nitrosoaniline (NDMA) can serve this function in vitro and is reduced to 4-(hydroxylamino)-N,N-dimethylaniline. It is also able to use ethanol and formaldehyde with an activity comparable to methanol, and has a weak activity with methylamine as substrate. The sequence is that of Methanol:N,N-dimethyl-4-nitrosoaniline oxidoreductase from Mycobacterium sp. (strain DSM 3803 / JC1).